We begin with the raw amino-acid sequence, 416 residues long: Choline/ethanolaminephosphotransferase 1 (416 aa).

The interval 1-20 is disordered; the sequence is MSGHRSTRKRCGDSHPESPV. Residue Ser18 is modified to Phosphoserine. Residue Thr40 is modified to Phosphothreonine. Residue Asn86 participates in CDP-choline binding. 2 consecutive transmembrane segments (helical) span residues 89–108 and 116–133; these read TIIGLSINICTTILLVFYCP and LWAYIACACGLFIYQSLD. Mg(2+) is bound at residue Asp133. A glycan (N-linked (GlcNAc...) asparagine) is linked at Asn144. Glu151 contacts CDP-choline. Asp154 contributes to the Mg(2+) binding site. The active-site Proton acceptor is the His155. 8 helical membrane-spanning segments follow: residues 156 to 176, 180 to 199, 210 to 230, 246 to 267, 286 to 306, 315 to 334, 349 to 363, and 368 to 388; these read GCDSLSTVFVVLGTCIAVQLG, DWMFFCCFAGTFMFYCAHWQ, IIDVTEVQIFIIIMHLLAVIG, MKLFPALCTVAGTIFSCTNYFR, VLSPFLHIGSVITLAVMIYKK, HPCLYILTFGFVSAKITNKL, TAFIGPALLFLDQYF, and DEYIVLWIALVFSFFDLIRYC. Position 158 (Asp158) interacts with Mg(2+).

This sequence belongs to the CDP-alcohol phosphatidyltransferase class-I family. As to quaternary structure, homodimer. Mg(2+) is required as a cofactor. It depends on Mn(2+) as a cofactor.

The protein localises to the endoplasmic reticulum membrane. The protein resides in the nucleus membrane. The enzyme catalyses CDP-ethanolamine + a 1,2-diacyl-sn-glycerol = a 1,2-diacyl-sn-glycero-3-phosphoethanolamine + CMP + H(+). The catalysed reaction is CDP-choline + a 1,2-diacyl-sn-glycerol = a 1,2-diacyl-sn-glycero-3-phosphocholine + CMP + H(+). It catalyses the reaction 1-O-alkyl-2-acyl-sn-glycerol + CDP-choline = a 1-O-alkyl-2-acyl-sn-glycero-3-phosphocholine + CMP + H(+). It carries out the reaction a 1-O-(1Z-alkenyl)-2-acyl-sn-glycerol + CDP-choline = a 1-O-(1Z-alkenyl)-2-acyl-sn-glycero-3-phosphocholine + CMP + H(+). The enzyme catalyses 1,2-dioctanoyl-sn-glycerol + CDP-choline = 1,2-dioctanoyl-sn-glycero-3-phosphocholine + CMP + H(+). The catalysed reaction is 1,2-didecanoyl-sn-glycerol + CDP-choline = 1,2-didecanoyl-sn-glycero-3-phosphocholine + CMP + H(+). It catalyses the reaction CDP-choline + 1,2-di-(9Z-octadecenoyl)-sn-glycerol = 1,2-di-(9Z-octadecenoyl)-sn-glycero-3-phosphocholine + CMP + H(+). It carries out the reaction 1-hexadecanoyl-2-(9Z-octadecenoyl)-sn-glycerol + CDP-choline = 1-hexadecanoyl-2-(9Z-octadecenoyl)-sn-glycero-3-phosphocholine + CMP + H(+). The enzyme catalyses CDP-ethanolamine + 1,2-di-(9Z-octadecenoyl)-sn-glycerol = 1,2-di-(9Z-octadecenoyl)-sn-glycero-3-phosphoethanolamine + CMP + H(+). The catalysed reaction is 1-hexadecanoyl-2-(9Z-octadecenoyl)-sn-glycerol + CDP-ethanolamine = 1-hexadecanoyl-2-(9Z-octadecenoyl)-sn-glycero-3-phosphoethanolamine + CMP + H(+). It catalyses the reaction 1-hexadecanoyl-2-(4Z,7Z,10Z,13Z,16Z,19Z-docosahexaenoyl)-sn-glycerol + CDP-choline = 1-hexadecanoyl-2-(4Z,7Z,10Z,13Z,16Z,19Z-docosahexaenoyl)-sn-glycero-3-phosphocholine + CMP + H(+). It carries out the reaction 1,2-di-(9Z-hexadecenoyl)-sn-glycerol + CDP-choline = 1,2-di-(9Z-hexadecenoyl)-sn-glycero-3-phosphocholine + CMP + H(+). The enzyme catalyses 1,2-di-(9Z-hexadecenoyl)-sn-glycerol + CDP-ethanolamine = 1,2-di-(9Z-hexadecenoyl)-sn-glycero-3-phosphoethanolamine + CMP + H(+). The catalysed reaction is 1-O-hexadecyl-2-acetyl-sn-glycerol + CDP-choline = 1-O-hexadecyl-2-acetyl-sn-glycero-3-phosphocholine + CMP + H(+). It catalyses the reaction 1-O-hexadecyl-2-(5Z,8Z,11Z,14Z-eicosatetraenoyl)-sn-glycerol + CDP-choline = 1-O-hexadecyl-2-(5Z,8Z,11Z,14Z)-eicosatetraenoyl-sn-glycero-3-phosphocholine + CMP + H(+). Its pathway is phospholipid metabolism; phosphatidylethanolamine biosynthesis; phosphatidylethanolamine from ethanolamine: step 3/3. It functions in the pathway phospholipid metabolism; phosphatidylcholine biosynthesis; phosphatidylcholine from phosphocholine: step 2/2. In terms of biological role, catalyzes both phosphatidylcholine and phosphatidylethanolamine biosynthesis from CDP-choline and CDP-ethanolamine, respectively. Involved in protein-dependent process of phospholipid transport to distribute phosphatidyl choline to the lumenal surface. Has a higher cholinephosphotransferase activity than ethanolaminephosphotransferase activity. This Rattus norvegicus (Rat) protein is Choline/ethanolaminephosphotransferase 1.